Reading from the N-terminus, the 429-residue chain is MKFTESEKLQKLSDEYILGGVNSPSRSYKAVGGGAPVMMRSGKGAYLYDVDGNKYIDYLQAYGPIITGHAHPHITEAIQEQAALGILYGTPTELEIEFAKKLRDAIPSLEKIRFVNSGTEAVMTTIRVARAYTKRNKIVKFAGQYHGHSDLVLVAAGSGPSQLGSPDSAGVPLSVAQEVITVPYNDIDAYKEAIDYWGDEIAAVLVEPIVGNFGMVEPKQGFLEQVNEITHNNGSLVIYDEVITAFRFHYGGAQDLYKVYPDLTAFGKIIGGGLPIGGYGGKQEIMEQVAPLGPAYQAGTMAGNPLSMKGGIALLEVLEQDGVYEQLDALGKRLEDGLLSLINKHNITATVNRVYGALTLYFTNETVVHYDQAENSDGEAFAKFFKLMLNQGINLAPSKFEAWFLTTEHTEEDIDSTLKAVDYAFSQMK.

Lys-268 bears the N6-(pyridoxal phosphate)lysine mark.

It belongs to the class-III pyridoxal-phosphate-dependent aminotransferase family. HemL subfamily. In terms of assembly, homodimer. Pyridoxal 5'-phosphate serves as cofactor.

It localises to the cytoplasm. It carries out the reaction (S)-4-amino-5-oxopentanoate = 5-aminolevulinate. It participates in porphyrin-containing compound metabolism; protoporphyrin-IX biosynthesis; 5-aminolevulinate from L-glutamyl-tRNA(Glu): step 2/2. The sequence is that of Glutamate-1-semialdehyde 2,1-aminomutase 1 from Staphylococcus saprophyticus subsp. saprophyticus (strain ATCC 15305 / DSM 20229 / NCIMB 8711 / NCTC 7292 / S-41).